The sequence spans 359 residues: Chorismate synthase (359 aa).

Position 47 (Arg-47) interacts with NADP(+). Residues 123 to 125 (RSS), Gly-283, 298 to 302 (KPTSS), and Arg-326 contribute to the FMN site.

It belongs to the chorismate synthase family. Homotetramer. FMNH2 is required as a cofactor.

The enzyme catalyses 5-O-(1-carboxyvinyl)-3-phosphoshikimate = chorismate + phosphate. It functions in the pathway metabolic intermediate biosynthesis; chorismate biosynthesis; chorismate from D-erythrose 4-phosphate and phosphoenolpyruvate: step 7/7. Functionally, catalyzes the anti-1,4-elimination of the C-3 phosphate and the C-6 proR hydrogen from 5-enolpyruvylshikimate-3-phosphate (EPSP) to yield chorismate, which is the branch point compound that serves as the starting substrate for the three terminal pathways of aromatic amino acid biosynthesis. This reaction introduces a second double bond into the aromatic ring system. This is Chorismate synthase from Chlamydia abortus (strain DSM 27085 / S26/3) (Chlamydophila abortus).